A 249-amino-acid chain; its full sequence is GTP cyclohydrolase III (249 aa).

Belongs to the archaeal-type GTP cyclohydrolase family.

The enzyme catalyses GTP + 3 H2O = 2-amino-5-formylamino-6-(5-phospho-D-ribosylamino)pyrimidin-4(3H)-one + 2 phosphate + 2 H(+). Its function is as follows. Catalyzes the formation of 2-amino-5-formylamino-6-ribofuranosylamino-4(3H)-pyrimidinone ribonucleotide monophosphate and inorganic phosphate from GTP. Also has an independent pyrophosphate phosphohydrolase activity. The sequence is that of GTP cyclohydrolase III from Methanothermobacter thermautotrophicus (strain ATCC 29096 / DSM 1053 / JCM 10044 / NBRC 100330 / Delta H) (Methanobacterium thermoautotrophicum).